Consider the following 125-residue polypeptide: UPF0538 protein C2C4.04c (125 aa).

Belongs to the UPF0538 family.

The sequence is that of UPF0538 protein C2C4.04c from Schizosaccharomyces pombe (strain 972 / ATCC 24843) (Fission yeast).